Consider the following 196-residue polypeptide: UMP-CMP kinase (196 aa).

An ATP-binding site is contributed by G13–T18. The tract at residues S33–V63 is NMP. Residues R39, K61–V63, and G93–R96 each bind a ribonucleoside 5'-phosphate. Position 100 (N100) interacts with CMP. The tract at residues E133–D143 is LID. R134 contributes to the ATP binding site. Positions 140 and 151 each coordinate a ribonucleoside 5'-phosphate. Position 179 (R179) interacts with ATP.

Belongs to the adenylate kinase family. UMP-CMP kinase subfamily. Monomer. The cofactor is Mg(2+).

The protein resides in the nucleus. Its subcellular location is the cytoplasm. It carries out the reaction CMP + ATP = CDP + ADP. The catalysed reaction is dCMP + ATP = dCDP + ADP. It catalyses the reaction UMP + ATP = UDP + ADP. The enzyme catalyses a 2'-deoxyribonucleoside 5'-diphosphate + ATP = a 2'-deoxyribonucleoside 5'-triphosphate + ADP. It carries out the reaction a ribonucleoside 5'-diphosphate + ATP = a ribonucleoside 5'-triphosphate + ADP. Catalyzes the phosphorylation of pyrimidine nucleoside monophosphates at the expense of ATP. Plays an important role in de novo pyrimidine nucleotide biosynthesis. Has preference for UMP and CMP as phosphate acceptors. Also displays broad nucleoside diphosphate kinase activity. The sequence is that of UMP-CMP kinase (cmpk) from Danio rerio (Zebrafish).